The primary structure comprises 291 residues: Pyridoxal 5'-phosphate synthase subunit PdxS (291 aa).

Asp-23 provides a ligand contact to D-ribose 5-phosphate. Lys-80 (schiff-base intermediate with D-ribose 5-phosphate) is an active-site residue. Gly-152 lines the D-ribose 5-phosphate pocket. D-glyceraldehyde 3-phosphate is bound at residue Arg-164. D-ribose 5-phosphate is bound by residues Gly-213 and 234 to 235 (GS).

Belongs to the PdxS/SNZ family. In the presence of PdxT, forms a dodecamer of heterodimers.

It carries out the reaction aldehydo-D-ribose 5-phosphate + D-glyceraldehyde 3-phosphate + L-glutamine = pyridoxal 5'-phosphate + L-glutamate + phosphate + 3 H2O + H(+). Its pathway is cofactor biosynthesis; pyridoxal 5'-phosphate biosynthesis. Its function is as follows. Catalyzes the formation of pyridoxal 5'-phosphate from ribose 5-phosphate (RBP), glyceraldehyde 3-phosphate (G3P) and ammonia. The ammonia is provided by the PdxT subunit. Can also use ribulose 5-phosphate and dihydroxyacetone phosphate as substrates, resulting from enzyme-catalyzed isomerization of RBP and G3P, respectively. The sequence is that of Pyridoxal 5'-phosphate synthase subunit PdxS from Bifidobacterium longum (strain NCC 2705).